Consider the following 170-residue polypeptide: Putative zinc finger protein 542 (170 aa).

A KRAB domain is found at 1–42; the sequence is MLENYQNLVWLGLSISKSVISLLEKRKLPWIMAKEEIRGPLP. C2H2-type zinc fingers lie at residues 98-120 and 126-148; these read NVCK…KRNH and NQCL…QRIH. The segment at 154–170 adopts a C2H2-type 3; degenerate zinc-finger fold; it reads YKCNECIKTFNQRAHLT.

This sequence belongs to the krueppel C2H2-type zinc-finger protein family.

It is found in the nucleus. In terms of biological role, may be involved in transcriptional regulation. This Homo sapiens (Human) protein is Putative zinc finger protein 542 (ZNF542P).